Here is a 917-residue protein sequence, read N- to C-terminus: DNA repair endonuclease XPF (917 aa).

A helicase-like region spans residues 1 to 457; that stretch reads MEPGLSGERR…EVWVNVRKGD (457 aa). Leucine-zipper stretches follow at residues 233–254 and 270–298; these read LNAC…DLSL and LDPL…LQYL. K289 carries the post-translational modification N6-acetyllysine. The segment covering 454–479 has biased composition (basic and acidic residues); sequence RKGDGPKRTTKSDKRPKAAPNKERAS. Disordered stretches follow at residues 454–524 and 643–681; these read RKGD…SSPE and VPEE…QNGT. Positions 487 to 492 match the Nuclear localization signal motif; the sequence is KRKKQE. Residues 507–516 show a composition bias toward basic and acidic residues; sequence EDKALEEDLC. Phosphoserine is present on S522. The segment covering 643-653 has biased composition (basic and acidic residues); sequence VPEEREGRDET. Positions 659–814 are nuclease; that stretch reads RGSAALDAPT…PSPHATAELF (156 aa). Positions 684-764 constitute an ERCC4 domain; the sequence is SIVVDMREFR…RPVLLIEFDP (81 aa). S765 is modified (phosphoserine). Positions 838–906 are hhH2, dimerization with ERCC1; sequence TLPESDRYNP…QLHDFLHTAY (69 aa). K912 is modified (N6-acetyllysine).

The protein belongs to the XPF family. In terms of assembly, heterodimer composed of ERCC1 and ERCC4/XPF. Interacts with SLX4/BTBD12; this interaction is direct and links the ERCC1-ERCC4/XPF complex to SLX4, which may coordinate the action of the structure-specific endonuclease during DNA repair. Mg(2+) serves as cofactor. In terms of processing, acetylation at Lys-912 by KAT5 promotes interaction with ERCC1 by disrupting a salt bridge between Asp-908 and Lys-912, thereby exposing a second binding site for ERCC1. Deacetylated by SIRT1.

It is found in the nucleus. The protein resides in the chromosome. Catalytic component of a structure-specific DNA repair endonuclease responsible for the 5-prime incision during DNA repair, and which is essential for nucleotide excision repair (NER) and interstrand cross-link (ICL) repair. The polypeptide is DNA repair endonuclease XPF (Mus musculus (Mouse)).